A 137-amino-acid chain; its full sequence is Large ribosomal subunit protein uL16 (137 aa).

Belongs to the universal ribosomal protein uL16 family. In terms of assembly, part of the 50S ribosomal subunit.

Its function is as follows. Binds 23S rRNA and is also seen to make contacts with the A and possibly P site tRNAs. This Streptococcus thermophilus (strain ATCC BAA-491 / LMD-9) protein is Large ribosomal subunit protein uL16.